A 224-amino-acid chain; its full sequence is Ion-translocating oxidoreductase complex subunit E (224 aa).

The next 5 helical transmembrane spans lie at 51–71 (LGLGIATLFVLICSNTVVSLF), 81–101 (IPIYVMIIATTVTVVQLLMNA), 105–125 (SLYQSLGIFIPLIVTNCIVIG), 140–160 (MFDGFAMGLGMCLSLVFLGAI), and 194–214 (HFLLAILPPGAFIGLGLILAI).

Belongs to the NqrDE/RnfAE family. As to quaternary structure, the complex is composed of six subunits: RnfA, RnfB, RnfC, RnfD, RnfE and RnfG.

The protein localises to the cell inner membrane. In terms of biological role, part of a membrane-bound complex that couples electron transfer with translocation of ions across the membrane. This chain is Ion-translocating oxidoreductase complex subunit E, found in Pasteurella multocida (strain Pm70).